The primary structure comprises 180 residues: Negative modulator of initiation of replication (180 aa).

Interaction with DNA regions lie at residues 86 to 87 (AV), 115 to 119 (RTRVY), and 149 to 155 (NTNTGRK).

This sequence belongs to the SeqA family. As to quaternary structure, homodimer. Polymerizes to form helical filaments.

The protein resides in the cytoplasm. Its function is as follows. Negative regulator of replication initiation, which contributes to regulation of DNA replication and ensures that replication initiation occurs exactly once per chromosome per cell cycle. Binds to pairs of hemimethylated GATC sequences in the oriC region, thus preventing assembly of replication proteins and re-initiation at newly replicated origins. Repression is relieved when the region becomes fully methylated. The chain is Negative modulator of initiation of replication from Enterobacter sp. (strain 638).